Reading from the N-terminus, the 156-residue chain is Zinc metalloproteinase-disintegrin jararin (156 aa).

Positions Phe1–Pro67 constitute a Peptidase M12B domain. Residue His8 participates in Zn(2+) binding. The active site involves Glu9. Zn(2+) is bound at residue His12. Disulfide bonds link Cys23-Cys47, Cys25-Cys30, Cys78-Cys97, Cys89-Cys107, Cys91-Cys102, Cys101-Cys124, Cys115-Cys121, Cys120-Cys145, and Cys133-Cys152. In terms of domain architecture, Disintegrin spans Pro75 to Ser156. Basic and acidic residues predominate over residues Gly136–Cys145. Residues Gly136–Ser156 are disordered. The Cell attachment site motif lies at Arg137–Asp139. Over residues Thr146–Ser156 the composition is skewed to polar residues.

It belongs to the venom metalloproteinase (M12B) family. P-II subfamily. P-IIb sub-subfamily. Monomer. It depends on Zn(2+) as a cofactor. As to expression, expressed by the venom gland.

It is found in the secreted. Snake venom zinc metalloproteinase that inhibits ADP-induced platelet aggregation (probably by binding integrin alpha-IIb/beta-3 (ITGA2B/ITGB3)) and degrades fibrinogen. The chain is Zinc metalloproteinase-disintegrin jararin from Bothrops jararaca (Jararaca).